The primary structure comprises 324 residues: Protein ChrB (324 aa).

Its function is as follows. Together with ChrA1, this protein reduces chromate accumulation and is essential for chromate resistance, possibly as a regulatory protein. The sequence is that of Protein ChrB from Cupriavidus metallidurans (strain ATCC 43123 / DSM 2839 / NBRC 102507 / CH34) (Ralstonia metallidurans).